Here is a 172-residue protein sequence, read N- to C-terminus: Small ribosomal subunit protein uS5 (172 aa).

The S5 DRBM domain maps to 17-80 (LREKMISVNR…EQARRNMFKV (64 aa)).

This sequence belongs to the universal ribosomal protein uS5 family. Part of the 30S ribosomal subunit. Contacts proteins S4 and S8.

Functionally, with S4 and S12 plays an important role in translational accuracy. Its function is as follows. Located at the back of the 30S subunit body where it stabilizes the conformation of the head with respect to the body. In Burkholderia lata (strain ATCC 17760 / DSM 23089 / LMG 22485 / NCIMB 9086 / R18194 / 383), this protein is Small ribosomal subunit protein uS5.